The primary structure comprises 505 residues: Alpha-ketoglutarate-dependent dioxygenase FTO (505 aa).

Threonine 4 is subject to Phosphothreonine. The interval 32 to 327 (TPKDDEFYQQ…SSTHRVAECS (296 aa)) is fe2OG dioxygenase domain. Arginine 96 and tyrosine 108 together coordinate substrate. Position 205 (asparagine 205) interacts with 2-oxoglutarate. Residues 213–224 (PYLKEEPYFGMG) form a loop L1; predicted to block binding of double-stranded DNA or RNA region. Lysine 216 carries the N6-acetyllysine modification. Residues histidine 231 and aspartate 233 each contribute to the Fe cation site. 231-234 (HHDE) is a binding site for substrate. Tyrosine 295 is a binding site for 2-oxoglutarate. Histidine 307 lines the Fe cation pocket. Residues 316–318 (RFS), threonine 320, and arginine 322 each bind 2-oxoglutarate.

It belongs to the fto family. Monomer. May also exist as homodimer. Requires Fe(2+) as cofactor.

The protein localises to the nucleus. It localises to the nucleus speckle. The protein resides in the cytoplasm. The catalysed reaction is a 5'-end (N(7)-methyl 5'-triphosphoguanosine)-(N(6),2'-O-dimethyladenosine) in mRNA + 2-oxoglutarate + O2 = a 5'-end (N(7)-methyl 5'-triphosphoguanosine)-(2'-O-methyladenosine) in mRNA + formaldehyde + succinate + CO2. The enzyme catalyses an N(6)-methyladenosine in mRNA + 2-oxoglutarate + O2 = an adenosine in mRNA + formaldehyde + succinate + CO2. It catalyses the reaction N(6)-methyladenosine in U6 snRNA + 2-oxoglutarate + O2 = adenosine in U6 snRNA + formaldehyde + succinate + CO2. It carries out the reaction a 5'-end (N(7)-methyl 5'-triphosphoguanosine)-(N(6),2'-O-dimethyladenosine) in U6 snRNA + 2-oxoglutarate + O2 = a 5'-end (N(7)-methyl 5'-triphosphoguanosine)-(2'-O-methyladenosine) in U6 snRNA + formaldehyde + succinate + CO2. The catalysed reaction is an N(1)-methyladenosine in tRNA + 2-oxoglutarate + O2 = an adenosine in tRNA + formaldehyde + succinate + CO2. With respect to regulation, activated by ascorbate. Inhibited by N-oxalylglycine, fumarate and succinate. Functionally, RNA demethylase that mediates oxidative demethylation of different RNA species, such as mRNAs, tRNAs and snRNAs, and acts as a regulator of fat mass, adipogenesis and energy homeostasis. Specifically demethylates N(6)-methyladenosine (m6A) RNA, the most prevalent internal modification of messenger RNA (mRNA) in higher eukaryotes. M6A demethylation by FTO affects mRNA expression and stability. Also able to demethylate m6A in U6 small nuclear RNA (snRNA). Mediates demethylation of N(6),2'-O-dimethyladenosine cap (m6A(m)), by demethylating the N(6)-methyladenosine at the second transcribed position of mRNAs and U6 snRNA. Demethylation of m6A(m) in the 5'-cap by FTO affects mRNA stability by promoting susceptibility to decapping. Also acts as a tRNA demethylase by removing N(1)-methyladenine from various tRNAs. Has no activity towards 1-methylguanine. Has no detectable activity towards double-stranded DNA. Also able to repair alkylated DNA and RNA by oxidative demethylation: demethylates single-stranded RNA containing 3-methyluracil, single-stranded DNA containing 3-methylthymine and has low demethylase activity towards single-stranded DNA containing 1-methyladenine or 3-methylcytosine. Ability to repair alkylated DNA and RNA is however unsure in vivo. Involved in the regulation of fat mass, adipogenesis and body weight, thereby contributing to the regulation of body size and body fat accumulation. Involved in the regulation of thermogenesis and the control of adipocyte differentiation into brown or white fat cells. Regulates activity of the dopaminergic midbrain circuitry via its ability to demethylate m6A in mRNAs. The protein is Alpha-ketoglutarate-dependent dioxygenase FTO of Pongo abelii (Sumatran orangutan).